Consider the following 205-residue polypeptide: Holliday junction branch migration complex subunit RuvA (205 aa).

Residues 1 to 64 (MIGRLKGILV…EDAQLLYGFI (64 aa)) are domain I. Residues 65-143 (HKEERSLFRL…SLMEASMGAE (79 aa)) form a domain II region. Positions 144-156 (REFVLKSNFTPAP) are flexible linker. The interval 157–205 (VAATVEEDAIAALLSLGYKPQQASKAVSSAFQEGMDPEQLIKAALKSML) is domain III.

This sequence belongs to the RuvA family. Homotetramer. Forms an RuvA(8)-RuvB(12)-Holliday junction (HJ) complex. HJ DNA is sandwiched between 2 RuvA tetramers; dsDNA enters through RuvA and exits via RuvB. An RuvB hexamer assembles on each DNA strand where it exits the tetramer. Each RuvB hexamer is contacted by two RuvA subunits (via domain III) on 2 adjacent RuvB subunits; this complex drives branch migration. In the full resolvosome a probable DNA-RuvA(4)-RuvB(12)-RuvC(2) complex forms which resolves the HJ.

It localises to the cytoplasm. Its function is as follows. The RuvA-RuvB-RuvC complex processes Holliday junction (HJ) DNA during genetic recombination and DNA repair, while the RuvA-RuvB complex plays an important role in the rescue of blocked DNA replication forks via replication fork reversal (RFR). RuvA specifically binds to HJ cruciform DNA, conferring on it an open structure. The RuvB hexamer acts as an ATP-dependent pump, pulling dsDNA into and through the RuvAB complex. HJ branch migration allows RuvC to scan DNA until it finds its consensus sequence, where it cleaves and resolves the cruciform DNA. This chain is Holliday junction branch migration complex subunit RuvA, found in Shewanella amazonensis (strain ATCC BAA-1098 / SB2B).